The chain runs to 726 residues: Beta-glucosidase cel3A (726 aa).

The signal sequence occupies residues 1 to 20 (MASRLVAGLQVLALAGTATA). Residues asparagine 223 and asparagine 592 are each glycosylated (N-linked (GlcNAc...) asparagine).

The protein belongs to the glycosyl hydrolase 3 family.

Its subcellular location is the secreted. It catalyses the reaction Hydrolysis of terminal, non-reducing beta-D-glucosyl residues with release of beta-D-glucose.. Its pathway is glycan metabolism; cellulose degradation. Its function is as follows. Beta-glucosidases are one of a number of cellulolytic enzymes involved in the degradation of cellulosic biomass. Catalyzes the last step releasing glucose from the inhibitory cellobiose. Has a broad substrate specificity but preferentially hydrolyzes highly polymerized 1,3- and 1,4-beta-glucans. This is Beta-glucosidase cel3A from Pyricularia oryzae (strain 70-15 / ATCC MYA-4617 / FGSC 8958) (Rice blast fungus).